We begin with the raw amino-acid sequence, 116 residues long: MTSYCDTLKALAAESDSTGSERATIRMYMAMFSDASLRPAVSDTVASILGTDSLDHEDAEMMLKFKLLFFSGSANASATSHYPKADDPQRFARSVSRGPSRVRRPARNSASRPVRR.

The tract at residues 77–116 (SATSHYPKADDPQRFARSVSRGPSRVRRPARNSASRPVRR) is disordered.

This is an uncharacterized protein from Frog virus 3 (isolate Goorha) (FV-3).